Here is a 338-residue protein sequence, read N- to C-terminus: Decarboxylase macB (338 aa).

Zn(2+) is bound by residues His-7, His-9, His-159, and Asp-283.

Belongs to the metallo-dependent hydrolases superfamily. ACMSD family.

It catalyses the reaction 6-methylsalicylate + H(+) = 3-methylphenol + CO2. It participates in secondary metabolite biosynthesis; terpenoid biosynthesis. Its function is as follows. Decarboxylase; part of the gene cluster that mediates the biosynthesis of macrophorins, isoprenoid epoxycyclohexenones containing cyclized drimane moieties. The first step of the pathway is the synthesis of 6-methylsalicylic acid (6-MSA) by the polyketide synthase macA. 6-MSA is then converted to m-cresol by the decarboxylase macB. The cytochrome P450 monooxygenase macC then catalyzes the oxidation of m-cresol to toluquinol. Epoxidation of toluquinol is then performed by the short chain dehydrogenase macD, with the help of macE, and a further prenylation by macG leads to 7-deacetoxyyanuthone A. The next step is the hydroxylation of C-22 of 7-deacetoxyyanuthone A by the cytochrome P450 monooxygenase macH to yield 22-deacetylyanuthone A. O-Mevalon transferase macI then attaches mevalon to the hydroxyl group of 22-deacetylyanuthone A to produce yanuthone E. The terpene cyclase macJ catalyzes the cyclization of 22-deacetylyanuthone A to macrophorin A. MacJ is also able to catalyze cyclization of yanuthone E and 7-deacetoxyyanuthone A to their corresponding macrophorins. The macJ products can be further modified by macH and macJ, as well as by the FAD-dependent monooxygenase macF, to produce additional macrophorins, including 4'-oxomacrophorin A, 4'-oxomacrophorin D and 4'-oxomacrophorin E. The chain is Decarboxylase macB from Penicillium terrestre.